Here is a 155-residue protein sequence, read N- to C-terminus: Protein U1 (155 aa).

The protein belongs to the nanovirus U1 protein family.

This Cicer arietinum (Chickpea) protein is Protein U1 (DNA-U1).